The sequence spans 1099 residues: Transmembrane protein 132D (1099 aa).

The first 30 residues, 1–30 (MCPSEMGTLWHHWSPVLISLAALFSKVTEG), serve as a signal peptide directing secretion. Over 31 to 915 (RGILESIQRF…LMQASKGLSD (885 aa)) the chain is Extracellular. N-linked (GlcNAc...) asparagine glycosylation occurs at N505. A disordered region spans residues 797–858 (FGQNDANPNT…LMEGRGTTTD (62 aa)). A compositionally biased stretch (low complexity) spans 835–848 (GSQEGQYYGSSSMG). The helical transmembrane segment at 916 to 936 (LEIGMYALLGVFCLAILVFLI) threads the bilayer. Residues 937 to 1099 (NCVTFALKYR…NYMERLHENV (163 aa)) lie on the Cytoplasmic side of the membrane.

Belongs to the TMEM132 family. In terms of assembly, interacts (via C-terminus) with NCKAP. Expressed in mature oligodendrocytes. Detected in the brain, lung, pancreas and testis. Highly expressed in mature neurons of the adult nervous system.

It is found in the membrane. In terms of biological role, regulate neuronals morphology via inhibition of the WAVE regulatory complex (WCR), a complex that controls F-actin cytoskeletal dynamics. The polypeptide is Transmembrane protein 132D (Homo sapiens (Human)).